The sequence spans 400 residues: Acetate kinase (400 aa).

Residue Asn10 participates in Mg(2+) binding. Lys17 contacts ATP. Substrate is bound at residue Arg91. Residue Asp150 is the Proton donor/acceptor of the active site. Residues 210-214, 285-287, and 333-337 contribute to the ATP site; these read HLGNG, DCR, and GIGEN. Glu387 is a Mg(2+) binding site.

The protein belongs to the acetokinase family. Homodimer. Mg(2+) is required as a cofactor. The cofactor is Mn(2+).

The protein resides in the cytoplasm. It catalyses the reaction acetate + ATP = acetyl phosphate + ADP. Its pathway is metabolic intermediate biosynthesis; acetyl-CoA biosynthesis; acetyl-CoA from acetate: step 1/2. In terms of biological role, catalyzes the formation of acetyl phosphate from acetate and ATP. Can also catalyze the reverse reaction. The protein is Acetate kinase of Photorhabdus laumondii subsp. laumondii (strain DSM 15139 / CIP 105565 / TT01) (Photorhabdus luminescens subsp. laumondii).